A 359-amino-acid polypeptide reads, in one-letter code: Peptide chain release factor 1 (359 aa).

N5-methylglutamine is present on Gln235.

It belongs to the prokaryotic/mitochondrial release factor family. In terms of processing, methylated by PrmC. Methylation increases the termination efficiency of RF1.

It localises to the cytoplasm. In terms of biological role, peptide chain release factor 1 directs the termination of translation in response to the peptide chain termination codons UAG and UAA. The protein is Peptide chain release factor 1 of Methylibium petroleiphilum (strain ATCC BAA-1232 / LMG 22953 / PM1).